A 358-amino-acid polypeptide reads, in one-letter code: Peptide chain release factor 1 (358 aa).

Residue glutamine 237 is modified to N5-methylglutamine.

This sequence belongs to the prokaryotic/mitochondrial release factor family. Post-translationally, methylated by PrmC. Methylation increases the termination efficiency of RF1.

It is found in the cytoplasm. In terms of biological role, peptide chain release factor 1 directs the termination of translation in response to the peptide chain termination codons UAG and UAA. The sequence is that of Peptide chain release factor 1 from Mycoplasma mobile (strain ATCC 43663 / 163K / NCTC 11711) (Mesomycoplasma mobile).